We begin with the raw amino-acid sequence, 758 residues long: Spastin (758 aa).

The tract at residues 1–99 (MVRTKNQSSS…PTTCSPRSGH (99 aa)) is disordered. The Cytoplasmic portion of the chain corresponds to 1–121 (MVRTKNQSSS…KQNLYVVSFP (121 aa)). The required for localization to punctate cytoplasmic foci stretch occupies residues 1-210 (MVRTKNQSSS…RPIQPLEMAA (210 aa)). Low complexity-rich tracts occupy residues 8–28 (SSSS…SSGA), 43–58 (RSSS…AGGS), 66–76 (SSNRRSPGSSP), and 85–95 (TDDLTPTTCSP). The segment at residues 122–142 (IIFLFNVLRSLIYQLFCIFRY) is an intramembrane region (helical). Topologically, residues 143–758 (LYGASTKVIY…WSQDYGDITI (616 aa)) are cytoplasmic. 2 stretches are compositionally biased toward polar residues: residues 169–180 (SKEQQQSLNHPS) and 189–198 (QEQQLSNQPQ). Positions 169–203 (SKEQQQSLNHPSELSREGDGQEQQLSNQPQRFRPI) are disordered. The sufficient for interaction with microtubules and microtubule severing stretch occupies residues 208–758 (MAANRPGGGY…WSQDYGDITI (551 aa)). The 76-residue stretch at 233–308 (HRRAFEYISK…SMARDRLHFL (76 aa)) folds into the MIT domain. Disordered regions lie at residues 353–375 (RVRS…SGRK) and 390–454 (NKSQ…ASTP). Polar residues-rich tracts occupy residues 390 to 406 (NKSQ…TSVG) and 425 to 454 (QFSS…ASTP). Residues 443 to 455 (NNGPSGSGASTPV) form a required for interaction with microtubules region. 523–530 (GPPGNGKT) contributes to the ATP binding site.

The protein belongs to the AAA ATPase family. Spastin subfamily. In terms of assembly, homohexamer. The homohexamer is stabilized by ATP-binding. The homohexamer may adopt a ring conformation through which microtubules pass prior to being severed. Interacts with microtubules. Interacts with atl; may be involved in microtubule dynamics.

It localises to the membrane. Its subcellular location is the cytoplasm. The protein localises to the cytoskeleton. It is found in the microtubule organizing center. The protein resides in the centrosome. It localises to the chromosome. Its subcellular location is the lipid droplet. It catalyses the reaction n ATP + n H2O + a microtubule = n ADP + n phosphate + (n+1) alpha/beta tubulin heterodimers.. Its function is as follows. ATP-dependent microtubule severing protein. Stimulates microtubule minus-end depolymerization and poleward microtubule flux in the mitotic spindle. Regulates microtubule stability in the neuromuscular junction synapse. Involved in lipid metabolism by regulating the size and distribution of lipid droplets. Involved in axon regeneration by regulating microtubule severing. The chain is Spastin from Drosophila erecta (Fruit fly).